Consider the following 553-residue polypeptide: Glucagon-like peptide 2 receptor (553 aa).

Residues 1–173 (MKLGSSRAGP…SFKQNVDRYA (173 aa)) are Extracellular-facing. Cystine bridges form between C83-C105, C96-C137, and C118-C159. 4 N-linked (GlcNAc...) asparagine glycosylation sites follow: N97, N113, N148, and N162. A helical transmembrane segment spans residues 174–198 (LLSTLQLMYTVGYSFSLISLFLALT). Residues 199-210 (LLLFLRKLHCTR) lie on the Cytoplasmic side of the membrane. Residues 211 to 235 (NYIHMNLFASFILRTLAVLVKDVVF) traverse the membrane as a helical segment. At 236-261 (YNSYSKRPDNENGWMSYLSEMSTSCR) the chain is on the extracellular side. Residues 262–285 (SVQVLLHYFVGANYLWLLVEGLYL) form a helical membrane-spanning segment. Topologically, residues 286–299 (HTLLEPTVLPERRL) are cytoplasmic. The chain crosses the membrane as a helical span at residues 300–321 (WPRYLLLGWAFPVLFVVPWGFA). Over 322 to 339 (RAHLENTGCWTTNGNKKI) the chain is Extracellular. Residues 340–362 (WWIIRGPMMLCVTVNFFIFLKIL) form a helical membrane-spanning segment. Over 363–386 (KLLISKLKAHQMCFRDYKYRLAKS) the chain is Cytoplasmic. The chain crosses the membrane as a helical span at residues 387-405 (TLVLIPLLGVHEILFSFIT). Over 406–417 (DDQVEGFAKLIR) the chain is Extracellular. The helical transmembrane segment at 418–438 (LFIQLTLSSFHGFLVALQYGF) threads the bilayer. Residues 439 to 550 (ANGEVKAELR…ANTMEEILEE (112 aa)) are Cytoplasmic-facing.

Belongs to the G-protein coupled receptor 2 family.

It localises to the cell membrane. Functionally, this is a receptor for glucagon-like peptide 2. The activity of this receptor is mediated by G proteins which activate adenylyl cyclase. This chain is Glucagon-like peptide 2 receptor (GLP2R), found in Homo sapiens (Human).